We begin with the raw amino-acid sequence, 48 residues long: Large ribosomal subunit protein bL36c (48 aa).

This sequence belongs to the bacterial ribosomal protein bL36 family.

Its subcellular location is the plastid. It localises to the chloroplast. In Guillardia theta (Cryptophyte), this protein is Large ribosomal subunit protein bL36c (rpl36).